A 720-amino-acid chain; its full sequence is uncharacterized protein (720 aa).

Gly2 carries N-myristoyl glycine; by host lipidation.

This is an uncharacterized protein from Cryphonectria parasitica mycoreovirus 1 (strain 9B21) (CpMYRV-1).